Consider the following 298-residue polypeptide: MQLEKMITEGSNTASAEIDRVSTLEMCRIINDEDKTVPPAVDRVLPDIAAAIDVIHAQVSGGGRLIYLGAGTSGRLGILDASECPPTYGVKPGLVVGLIAGGEYAIQHAVEGAEDSREGGVNDLKNINLTAQDVVVGIAASGRTPYVIAGLEYARQLGCRTVGISCNPGSAVSTTAEFAITPIVGAEVVTGSSRMKAGTAQKLVLNMLSTGLMIKSGKVFGNLMVDVVATNEKLHVRQVNIVKNATGCNAEQAEAALIACERNCKTAIVMVLKNLDAAEAKKRLDQHGGFIRQVLDKE.

One can recognise an SIS domain in the interval 55–218 (IHAQVSGGGR…STGLMIKSGK (164 aa)). Catalysis depends on E83, which acts as the Proton donor. E114 is an active-site residue.

This sequence belongs to the GCKR-like family. MurNAc-6-P etherase subfamily. As to quaternary structure, homodimer.

It catalyses the reaction N-acetyl-D-muramate 6-phosphate + H2O = N-acetyl-D-glucosamine 6-phosphate + (R)-lactate. It participates in amino-sugar metabolism; 1,6-anhydro-N-acetylmuramate degradation. It functions in the pathway amino-sugar metabolism; N-acetylmuramate degradation. The protein operates within cell wall biogenesis; peptidoglycan recycling. Specifically catalyzes the cleavage of the D-lactyl ether substituent of MurNAc 6-phosphate, producing GlcNAc 6-phosphate and D-lactate. Together with AnmK, is also required for the utilization of anhydro-N-acetylmuramic acid (anhMurNAc) either imported from the medium or derived from its own cell wall murein, and thus plays a role in cell wall recycling. This chain is N-acetylmuramic acid 6-phosphate etherase, found in Shigella flexneri.